A 146-amino-acid chain; its full sequence is UPF0742 protein SPAC977.02 (146 aa).

The chain crosses the membrane as a helical span at residues L38–S60.

This sequence belongs to the UPF0742 family.

The protein resides in the cytoplasm. It is found in the nucleus membrane. This is UPF0742 protein SPAC977.02 from Schizosaccharomyces pombe (strain 972 / ATCC 24843) (Fission yeast).